The following is a 141-amino-acid chain: Hemoglobin subunit alpha-D (141 aa).

The Globin domain maps to 1–141 (VLTHEDCELL…VGDMLAEKYR (141 aa)). Heme b-binding residues include histidine 58 and histidine 87.

The protein belongs to the globin family. In terms of assembly, there are three forms of hemoglobin in Sphenodon: A, A' and D. Hb A is a tetramer of two alpha-A and two beta-1, Hb A' is a tetramer of two alpha-a and two beta-2, Hb D is a tetramer of two alpha-D and two beta-2. In terms of tissue distribution, red blood cells.

Involved in oxygen transport from the lung to the various peripheral tissues. The chain is Hemoglobin subunit alpha-D (HBAD) from Sphenodon punctatus (Tuatara).